Reading from the N-terminus, the 219-residue chain is Apoptosis regulator OPG045 (219 aa).

Belongs to the orthopoxvirus OPG045 family. In terms of assembly, homodimer. Interacts with host pro-apoptotic protein BCL2L11 (via BH3 domain). Interacts with host NLRP1. Interacts with host BAK.

It is found in the host mitochondrion outer membrane. The protein localises to the host cytoplasm. Plays a role in evading host innate immune response by inhibiting host inflammasome activation. Interacts with and inhibits NLR-mediated interleukin-1 beta/IL1B production in infected cells. At the host mitochondria outer membrane, interacts with the BH3 domain of host BAK and prevents BAK from binding active BAX. In turn, host apoptosis is inhibited. In Cynomys gunnisoni (Gunnison's prairie dog), this protein is Apoptosis regulator OPG045 (OPG045).